The chain runs to 653 residues: Extracellular metalloproteinase (653 aa).

The N-terminal stretch at Met1–Gly19 is a signal peptide. The propeptide occupies His20–Asp244. Asn327, Asn336, and Asn412 each carry an N-linked (GlcNAc...) asparagine glycan. Residue His429 participates in Zn(2+) binding. Residue Glu430 is part of the active site. His433 is a Zn(2+) binding site. Residues Asn636 and Asn637 are each glycosylated (N-linked (GlcNAc...) asparagine).

It belongs to the peptidase M36 family. Requires Zn(2+) as cofactor.

It is found in the secreted. Its function is as follows. Secreted metalloproteinase that allows assimilation of proteinaceous substrates. The sequence is that of Extracellular metalloproteinase (MEP) from Pyrenophora tritici-repentis (strain Pt-1C-BFP) (Wheat tan spot fungus).